Reading from the N-terminus, the 314-residue chain is uncharacterized protein (314 aa).

The disordered stretch occupies residues 39–146 (QENVDSDSTD…SDYSSDESNS (108 aa)). Over residues 56–76 (STKNVSRNIPKNIPKSISKNI) the composition is skewed to polar residues. Positions 88-131 (IPKNVSKNIPKNVPKNVSKNIPKNIPKNVPNKSRNKYSNYSEDS) are enriched in low complexity. A compositionally biased stretch (acidic residues) spans 132–141 (NYSEDSDYSS).

This is an uncharacterized protein from Acanthamoeba polyphaga mimivirus (APMV).